Consider the following 498-residue polypeptide: Cobyric acid synthase (498 aa).

The GATase cobBQ-type domain maps to 257-447 (DLEIAVLRLP…LHGLLDNGPW (191 aa)). Cysteine 338 serves as the catalytic Nucleophile. Histidine 439 is a catalytic residue.

The protein belongs to the CobB/CobQ family. CobQ subfamily.

It participates in cofactor biosynthesis; adenosylcobalamin biosynthesis. In terms of biological role, catalyzes amidations at positions B, D, E, and G on adenosylcobyrinic A,C-diamide. NH(2) groups are provided by glutamine, and one molecule of ATP is hydrogenolyzed for each amidation. The polypeptide is Cobyric acid synthase (Synechococcus sp. (strain CC9605)).